The following is a 549-amino-acid chain: Glucose-6-phosphate isomerase (549 aa).

N6-acetyllysine is present on residues lysine 80, lysine 228, and lysine 234. Catalysis depends on glutamate 355, which acts as the Proton donor. Residues histidine 386 and lysine 514 contribute to the active site.

The protein belongs to the GPI family.

It localises to the cytoplasm. The catalysed reaction is alpha-D-glucose 6-phosphate = beta-D-fructose 6-phosphate. The protein operates within carbohydrate biosynthesis; gluconeogenesis. It functions in the pathway carbohydrate degradation; glycolysis; D-glyceraldehyde 3-phosphate and glycerone phosphate from D-glucose: step 2/4. In terms of biological role, catalyzes the reversible isomerization of glucose-6-phosphate to fructose-6-phosphate. This Escherichia fergusonii (strain ATCC 35469 / DSM 13698 / CCUG 18766 / IAM 14443 / JCM 21226 / LMG 7866 / NBRC 102419 / NCTC 12128 / CDC 0568-73) protein is Glucose-6-phosphate isomerase.